The chain runs to 239 residues: Homeobox-leucine zipper protein HOX12 (239 aa).

Positions 25–65 (ATSGGEQKKARQRRRRKVKPEAAAALAGESGGDEQAKKRRL) are disordered. A DNA-binding region (homeobox) is located at residues 58–117 (EQAKKRRLSDEQARFLEMSFKKERKLETPRKVQLAAELGLDAKQVAVWFQNRRARHKSKL). A coiled-coil region spans residues 107-168 (QNRRARHKSK…KLAAVAAATT (62 aa)).

It belongs to the HD-ZIP homeobox family. Class I subfamily. Expressed in seedlings, roots, stems, leaf sheaths and panicles.

It localises to the nucleus. Its function is as follows. Probable transcription factor. The sequence is that of Homeobox-leucine zipper protein HOX12 (HOX12) from Oryza sativa subsp. japonica (Rice).